A 396-amino-acid polypeptide reads, in one-letter code: Elongation factor Tu 2 (396 aa).

Positions 10–206 (KPHVNVGTIG…ALDSYIPLPE (197 aa)) constitute a tr-type G domain. Residues 19–26 (GHVDHGKT) are G1. 19–26 (GHVDHGKT) serves as a coordination point for GTP. Residue Thr-26 coordinates Mg(2+). Residues 60 to 64 (GITIN) form a G2 region. A G3 region spans residues 81 to 84 (DCPG). Residues 81-85 (DCPGH) and 136-139 (NKCD) contribute to the GTP site. The G4 stretch occupies residues 136 to 139 (NKCD). The interval 174 to 176 (SAK) is G5.

This sequence belongs to the TRAFAC class translation factor GTPase superfamily. Classic translation factor GTPase family. EF-Tu/EF-1A subfamily. In terms of assembly, monomer.

It localises to the cytoplasm. The catalysed reaction is GTP + H2O = GDP + phosphate + H(+). GTP hydrolase that promotes the GTP-dependent binding of aminoacyl-tRNA to the A-site of ribosomes during protein biosynthesis. The chain is Elongation factor Tu 2 from Albidiferax ferrireducens (strain ATCC BAA-621 / DSM 15236 / T118) (Rhodoferax ferrireducens).